Consider the following 89-residue polypeptide: UPF0147 protein Saci_0891 (89 aa).

Belongs to the UPF0147 family.

This is UPF0147 protein Saci_0891 from Sulfolobus acidocaldarius (strain ATCC 33909 / DSM 639 / JCM 8929 / NBRC 15157 / NCIMB 11770).